A 106-amino-acid chain; its full sequence is MASSGSGDPLDSKRGEAPFAQRIDPTREKLTPEQLHFMRQAQLAQWQKVLPRRRTRNIVTGLGIGALVLAIHGYTFYSISQERFLDELEDEAKAARARALARASGS.

Positions 1–28 (MASSGSGDPLDSKRGEAPFAQRIDPTRE) are disordered. A2 is modified (N-acetylalanine). Residues 2–57 (ASSGSGDPLDSKRGEAPFAQRIDPTREKLTPEQLHFMRQAQLAQWQKVLPRRRTRN) lie on the Mitochondrial matrix side of the membrane. A helical membrane pass occupies residues 58 to 80 (IVTGLGIGALVLAIHGYTFYSIS). A coiled-coil region spans residues 78 to 104 (SISQERFLDELEDEAKAARARALARAS). Topologically, residues 81-106 (QERFLDELEDEAKAARARALARASGS) are mitochondrial intermembrane.

Belongs to the COA3 family. As to quaternary structure, along with COX14, core component of the MITRAC (mitochondrial translation regulation assembly intermediate of cytochrome c oxidase complex) complex. Interacts with MT-CO1/COX1, SMIM20, SURF1 and TIMM21.

Its subcellular location is the mitochondrion inner membrane. In terms of biological role, core component of the MITRAC (mitochondrial translation regulation assembly intermediate of cytochrome c oxidase complex) complex, that regulates cytochrome c oxidase assembly. MITRAC complexes regulate both translation of mitochondrial encoded components and assembly of nuclear-encoded components imported in mitochondrion. Required for efficient translation of MT-CO1 and mitochondrial respiratory chain complex IV assembly. The polypeptide is Cytochrome c oxidase assembly factor 3 homolog, mitochondrial (COA3) (Pongo abelii (Sumatran orangutan)).